The chain runs to 1036 residues: Beta-galactosidase (1036 aa).

Substrate is bound by residues N97 and D197. D197 contributes to the Na(+) binding site. Positions 411, 413, and 456 each coordinate Mg(2+). Residues E456 and 532 to 535 (EYAH) contribute to the substrate site. Residue E456 is the Proton donor of the active site. E532 acts as the Nucleophile in catalysis. Residue N592 participates in Mg(2+) binding. Residues F596 and D599 each contribute to the Na(+) site. Residues D599 and W1006 each contribute to the substrate site.

The protein belongs to the glycosyl hydrolase 2 family. Homotetramer. It depends on Mg(2+) as a cofactor. Requires Na(+) as cofactor.

It carries out the reaction Hydrolysis of terminal non-reducing beta-D-galactose residues in beta-D-galactosides.. The polypeptide is Beta-galactosidase (Leuconostoc mesenteroides subsp. mesenteroides (strain ATCC 8293 / DSM 20343 / BCRC 11652 / CCM 1803 / JCM 6124 / NCDO 523 / NBRC 100496 / NCIMB 8023 / NCTC 12954 / NRRL B-1118 / 37Y)).